A 96-amino-acid chain; its full sequence is Large ribosomal subunit protein uL23cz (96 aa).

It belongs to the universal ribosomal protein uL23 family. In terms of assembly, part of the 50S ribosomal subunit.

The protein localises to the plastid. Its subcellular location is the chloroplast. Functionally, binds to 23S rRNA. In Sorghum bicolor (Sorghum), this protein is Large ribosomal subunit protein uL23cz (rpl23-A).